Here is a 921-residue protein sequence, read N- to C-terminus: Bifunctional aspartokinase/homoserine dehydrogenase, chloroplastic (921 aa).

The N-terminal 87 residues, 1 to 87, are a transit peptide targeting the chloroplast; it reads SLSSAISPSS…DDSVEKVHLP (87 aa). The interval 88–339 is aspartokinase; the sequence is RGAMWSIHKF…VSEAVVLKTL (252 aa). The segment at 340–567 is interface; the sequence is SYQEAWEMSY…LSRTTIAVGI (228 aa). 2 consecutive ACT domains span residues 417–489 and 498–575; these read VEGT…QVAN and TVGQ…LIGA. Positions 568–921 are homoserine dehydrogenase; sequence VGPGLIGATL…RLASYLGAPS (354 aa). I573 serves as a coordination point for NAD(+). Residues I573, R605, T654, and K678 each coordinate NADP(+). I573 is an NADPH binding site. Residue T654 participates in NAD(+) binding. 2 residues coordinate NADPH: T654 and K678. Residues E705, V708, A710, and L712 each contribute to the Na(+) site. Positions 763 and 766 each coordinate NADP(+). L-homoserine is bound by residues E766 and D777. Catalysis depends on K781, which acts as the Proton donor. G898 provides a ligand contact to NAD(+). NADP(+) is bound at residue G898. An NADPH-binding site is contributed by G898.

This sequence in the N-terminal section; belongs to the aspartokinase family. It in the C-terminal section; belongs to the homoserine dehydrogenase family. A metal cation is required as a cofactor.

It localises to the plastid. The protein resides in the chloroplast. It catalyses the reaction L-homoserine + NADP(+) = L-aspartate 4-semialdehyde + NADPH + H(+). It carries out the reaction L-homoserine + NAD(+) = L-aspartate 4-semialdehyde + NADH + H(+). The enzyme catalyses L-aspartate + ATP = 4-phospho-L-aspartate + ADP. The protein operates within amino-acid biosynthesis; L-lysine biosynthesis via DAP pathway; (S)-tetrahydrodipicolinate from L-aspartate: step 1/4. It participates in amino-acid biosynthesis; L-methionine biosynthesis via de novo pathway; L-homoserine from L-aspartate: step 1/3. It functions in the pathway amino-acid biosynthesis; L-methionine biosynthesis via de novo pathway; L-homoserine from L-aspartate: step 3/3. Its pathway is amino-acid biosynthesis; L-threonine biosynthesis; L-threonine from L-aspartate: step 1/5. The protein operates within amino-acid biosynthesis; L-threonine biosynthesis; L-threonine from L-aspartate: step 3/5. Bifunctional aspartate kinase and homoserine dehydrogenase that catalyzes the first and the third steps toward the synthesis of lysine, methionine and threonine from aspartate. The chain is Bifunctional aspartokinase/homoserine dehydrogenase, chloroplastic from Daucus carota (Wild carrot).